The chain runs to 248 residues: 2,3-bisphosphoglycerate-dependent phosphoglycerate mutase (248 aa).

Substrate is bound by residues 8–15 (RHGESAWN), 21–22 (TG), Arg-60, 87–90 (EKHY), Lys-98, 114–115 (RR), and 183–184 (GN). The active-site Tele-phosphohistidine intermediate is the His-9. Glu-87 acts as the Proton donor/acceptor in catalysis.

Belongs to the phosphoglycerate mutase family. BPG-dependent PGAM subfamily.

The enzyme catalyses (2R)-2-phosphoglycerate = (2R)-3-phosphoglycerate. It functions in the pathway carbohydrate degradation; glycolysis; pyruvate from D-glyceraldehyde 3-phosphate: step 3/5. Catalyzes the interconversion of 2-phosphoglycerate and 3-phosphoglycerate. This is 2,3-bisphosphoglycerate-dependent phosphoglycerate mutase from Bacteroides fragilis (strain ATCC 25285 / DSM 2151 / CCUG 4856 / JCM 11019 / LMG 10263 / NCTC 9343 / Onslow / VPI 2553 / EN-2).